The sequence spans 200 residues: Ubiquinol-cytochrome-c reductase complex assembly factor 1 (200 aa).

The protein belongs to the CBP3 family.

Its subcellular location is the mitochondrion inner membrane. In terms of biological role, required for the assembly of the ubiquinol-cytochrome c reductase complex (mitochondrial respiratory chain complex III or cytochrome b-c1 complex). May be involved in cytochrome b translation and/or stability. The protein is Ubiquinol-cytochrome-c reductase complex assembly factor 1 (uqcc1) of Xenopus laevis (African clawed frog).